The following is a 403-amino-acid chain: Signal-transducing adaptor protein 2 (403 aa).

The 113-residue stretch at 18-130 folds into the PH domain; that stretch reads PSHYYESFLE…VPTDLTLLPG (113 aa). Tyr-22 is modified (phosphotyrosine; by SRC). The region spanning 133 to 248 is the SH2 domain; sequence YMMSEVLAKE…KALVPFLLDE (116 aa). Tyr-250 bears the Phosphotyrosine; by PTK6 mark. The tract at residues 270–308 is disordered; the sequence is APSAPGPGPAPCTGGPKPLSPASSQDKLPPLPPLPNQEE. Tyr-310 carries the phosphotyrosine modification. Position 322 is a phosphotyrosine; by SRC (Tyr-322). Positions 331 to 374 are disordered; that stretch reads SWPVILKPKKLPKPPAKLPKPPVGPKPEPKVFNGGLGRKLPVSS. A compositionally biased stretch (pro residues) spans 343 to 356; the sequence is KPPAKLPKPPVGPK. Residues 382–402 adopt a coiled-coil conformation; it reads AGLADMTAELQKKLEKRRALE.

As to quaternary structure, interacts with PTK6 and CSF1R. Post-translationally, phosphorylated on tyrosine. Tyr-250 may be important for interaction with kinases. Phosphorylated by PTK6 at Tyr-250 modulates PTK6-mediated STAT3 activation. Tyr-22 and Tyr-322 appears to be phosphorylated by SRC. As to expression, widely expressed.

The protein localises to the cytoplasm. Its function is as follows. Substrate of protein kinase PTK6. May play a regulatory role in the acute-phase response in systemic inflammation and may modulate STAT3 activity. The protein is Signal-transducing adaptor protein 2 (STAP2) of Homo sapiens (Human).